We begin with the raw amino-acid sequence, 475 residues long: Lipoprotein lipase (475 aa).

The N-terminal stretch at 1-27 (MESKALLVLTLAVWLQSLTASRGGVAA) is a signal peptide. Residues 32-53 (RDFIDIESKFALRTPEDTAEDT) form an interaction with GPIHBP1 region. C54 and C67 form a disulfide bridge. An N-linked (GlcNAc...) asparagine glycan is attached at N70. Y121 is subject to 3'-nitrotyrosine. S159 (nucleophile) is an active-site residue. Catalysis depends on D183, which acts as the Charge relay system. A 3'-nitrotyrosine modification is found at Y191. Ca(2+) contacts are provided by A194, R197, S199, and D202. C243 and C266 are joined by a disulfide. The segment at 243 to 266 (CNIGEAIRVIAERGLGDVDQLVKC) is essential for determining substrate specificity. H268 serves as the catalytic Charge relay system. 2 disulfides stabilise this stretch: C291–C310 and C302–C305. One can recognise a PLAT domain in the interval 341 to 464 (FHYQVKIHFS…KGKAPAVFVK (124 aa)). The residue at position 343 (Y343) is a 3'-nitrotyrosine. N386 is a glycosylation site (N-linked (GlcNAc...) asparagine). Positions 417 to 421 (WSDWW) are important for interaction with lipoprotein particles. The segment at 430–434 (KIRVK) is important for heparin binding. The interval 443–467 (IFCSREKVSHLQKGKAPAVFVKCHD) is interaction with GPIHBP1. A disulfide bridge connects residues C445 and C465.

This sequence belongs to the AB hydrolase superfamily. Lipase family. As to quaternary structure, homodimer. Interacts with GPIHBP1 with 1:1 stoichiometry. Interacts with APOC2; the interaction activates LPL activity in the presence of lipids. Interaction with heparan sulfate proteoglycans is required to protect LPL against loss of activity. Associates with lipoprotein particles in blood plasma. Interacts with LMF1 and SEL1L; interaction with SEL1L is required to prevent aggregation of newly synthesized LPL in the endoplasmic reticulum (ER), and for normal export of LPL from the ER to the extracellular space. Interacts with SORL1; SORL1 acts as a sorting receptor, promoting LPL localization to endosomes and later to lysosomes, leading to degradation of newly synthesized LPL. Tyrosine nitration after lipopolysaccharide (LPS) challenge down-regulates the lipase activity. As to expression, detected in blood plasma. Detected in milk (at protein level).

It localises to the cell membrane. It is found in the secreted. The protein resides in the extracellular space. The protein localises to the extracellular matrix. It catalyses the reaction a triacylglycerol + H2O = a diacylglycerol + a fatty acid + H(+). The enzyme catalyses a 1,2-diacyl-sn-glycero-3-phosphocholine + H2O = a 2-acyl-sn-glycero-3-phosphocholine + a fatty acid + H(+). It carries out the reaction 1,2,3-tri-(9Z-octadecenoyl)-glycerol + H2O = di-(9Z)-octadecenoylglycerol + (9Z)-octadecenoate + H(+). The catalysed reaction is 1,2-di-(9Z-octadecenoyl)-sn-glycero-3-phosphocholine + H2O = (9Z-octadecenoyl)-sn-glycero-3-phosphocholine + (9Z)-octadecenoate + H(+). It catalyses the reaction 1,2,3-tributanoylglycerol + H2O = dibutanoylglycerol + butanoate + H(+). The enzyme catalyses 1,2-dihexadecanoyl-sn-glycero-3-phosphocholine + H2O = hexadecanoyl-sn-glycero-3-phosphocholine + hexadecanoate + H(+). With respect to regulation, the apolipoprotein APOC2 acts as a coactivator of LPL activity. Ca(2+) binding promotes protein stability and formation of the active homodimer. Interaction with GPIHBP1 protects LPL against inactivation by ANGPTL4. Inhibited by NaCl. Functionally, key enzyme in triglyceride metabolism. Catalyzes the hydrolysis of triglycerides from circulating chylomicrons and very low density lipoproteins (VLDL), and thereby plays an important role in lipid clearance from the blood stream, lipid utilization and storage. Although it has both phospholipase and triglyceride lipase activities it is primarily a triglyceride lipase with low but detectable phospholipase activity. Mediates margination of triglyceride-rich lipoprotein particles in capillaries. Recruited to its site of action on the luminal surface of vascular endothelium by binding to GPIHBP1 and cell surface heparan sulfate proteoglycans. The sequence is that of Lipoprotein lipase (LPL) from Homo sapiens (Human).